Here is a 152-residue protein sequence, read N- to C-terminus: uncharacterized protein (152 aa).

Residues 1 to 24 (MRKMLAYTLYIVTYLTYIMNEVEC) form the signal peptide.

This is an uncharacterized protein from Acheta domesticus (House cricket).